We begin with the raw amino-acid sequence, 404 residues long: Flavohemoprotein (404 aa).

Residues 1–138 (MLSEQTRSLV…LADTLIGIEN (138 aa)) form the Globin domain. Residue histidine 85 coordinates heme b. Active-site charge relay system residues include tyrosine 95 and glutamate 137. The tract at residues 149 to 404 (GGWSGWRPFR…EVFGSHPGDD (256 aa)) is reductase. Residues 152-263 (SGWRPFRVAK…SAPQGDFFLH (112 aa)) enclose the FAD-binding FR-type domain. Residues tyrosine 190 and 206–209 (RQYS) each bind FAD. 276–281 (GVGQTP) is a binding site for NADP(+). An FAD-binding site is contributed by 396–399 (VFGS).

This sequence belongs to the globin family. Two-domain flavohemoproteins subfamily. The protein in the C-terminal section; belongs to the flavoprotein pyridine nucleotide cytochrome reductase family. Heme b serves as cofactor. FAD is required as a cofactor.

The catalysed reaction is 2 nitric oxide + NADPH + 2 O2 = 2 nitrate + NADP(+) + H(+). It catalyses the reaction 2 nitric oxide + NADH + 2 O2 = 2 nitrate + NAD(+) + H(+). Functionally, is involved in NO detoxification in an aerobic process, termed nitric oxide dioxygenase (NOD) reaction that utilizes O(2) and NAD(P)H to convert NO to nitrate, which protects the bacterium from various noxious nitrogen compounds. Therefore, plays a central role in the inducible response to nitrosative stress. In Chromobacterium violaceum (strain ATCC 12472 / DSM 30191 / JCM 1249 / CCUG 213 / NBRC 12614 / NCIMB 9131 / NCTC 9757 / MK), this protein is Flavohemoprotein.